Consider the following 388-residue polypeptide: tRNA-specific adenosine deaminase 1 (388 aa).

One can recognise an A to I editase domain in the interval 63–388 (CLATGVKCTP…PNGGNEFQWI (326 aa)). His89 contributes to the Zn(2+) binding site. Glu91 functions as the Proton donor in the catalytic mechanism. Arg96 is a binding site for 1D-myo-inositol hexakisphosphate. Zn(2+)-binding residues include Cys144 and Cys201. 3 residues coordinate 1D-myo-inositol hexakisphosphate: Lys204, Lys357, and Arg363.

This sequence belongs to the ADAT1 family. 1D-myo-inositol hexakisphosphate is required as a cofactor. The cofactor is Zn(2+).

It is found in the cytoplasm. Its subcellular location is the nucleus. The catalysed reaction is adenosine(37) in tRNA(Ala) + H2O + H(+) = inosine(37) in tRNA(Ala) + NH4(+). Its function is as follows. Deaminates adenosine-37 to inosine in tRNA-Ala. The protein is tRNA-specific adenosine deaminase 1 of Schizosaccharomyces pombe (strain 972 / ATCC 24843) (Fission yeast).